The sequence spans 197 residues: UPF0301 protein AnaeK_4073 (197 aa).

It belongs to the UPF0301 (AlgH) family.

This is UPF0301 protein AnaeK_4073 from Anaeromyxobacter sp. (strain K).